A 222-amino-acid chain; its full sequence is uncharacterized protein (222 aa).

2 helical membrane-spanning segments follow: residues 22 to 42 and 189 to 209; these read IRVI…FLYI and AICL…FCLV.

The protein localises to the cell membrane. This is an uncharacterized protein from Escherichia coli (strain K12).